We begin with the raw amino-acid sequence, 242 residues long: Small ribosomal subunit protein uS2 (242 aa).

It belongs to the universal ribosomal protein uS2 family.

In Shewanella putrefaciens (strain CN-32 / ATCC BAA-453), this protein is Small ribosomal subunit protein uS2.